Reading from the N-terminus, the 351-residue chain is Cyanuric acid amidohydrolase (351 aa).

The tract at residues 1–96 is RU A; it reads MPSLRAHVFR…HWTVFARETV (96 aa). Substrate-binding positions include R53 and 77–78; that span reads SG. Positions 103–240 are RU B; it reads ALAIGVSRTP…HEIIVLGMSA (138 aa). Residue K153 is part of the active site. Substrate contacts are provided by residues R185 and 223 to 224; that span reads SS. S223 acts as the Nucleophile in catalysis. The segment at 246–351 is RU C; sequence LSIDHAVMLD…PVAIIVEKEQ (106 aa). Residue E283 coordinates Mg(2+). Substrate contacts are provided by residues R310 and 329–330; that span reads SG. A332, Q335, G336, P337, and G340 together coordinate Mg(2+).

It belongs to the cyclic amide hydrolase (CyAH) family. In terms of assembly, homotetramer.

It carries out the reaction cyanurate + H2O = 1-carboxybiuret + H(+). Its pathway is xenobiotic degradation; atrazine degradation; biuret from cyanurate: step 1/1. Its activity is regulated as follows. Inhibited by barbituric acid. Its function is as follows. Responsible for the hydrolysis of cyanuric acid, an intermediate formed during catabolism of s-triazine based compounds in herbicides such as atrazine and polymers such as melamine. Catalyzes the hydrolytic opening of the s-triazine ring of cyanuric acid (2,4,6-trihydroxy-s-triazine) to yield carbon dioxide and carboxybiuret, which spontaneously decarboxylates to biuret. The chain is Cyanuric acid amidohydrolase from Rhizobium leguminosarum bv. trifolii (strain WSM1325).